The following is a 332-amino-acid chain: Glyceraldehyde-3-phosphate dehydrogenase 1 (332 aa).

Residues 11-12 (RI), D32, and R77 each bind NAD(+). Residues 148-150 (SCT), T179, 208-209 (TG), and R231 contribute to the D-glyceraldehyde 3-phosphate site. The Nucleophile role is filled by C149. Position 313 (N313) interacts with NAD(+).

Belongs to the glyceraldehyde-3-phosphate dehydrogenase family. Homotetramer.

Its subcellular location is the cytoplasm. The enzyme catalyses D-glyceraldehyde 3-phosphate + phosphate + NAD(+) = (2R)-3-phospho-glyceroyl phosphate + NADH + H(+). Its pathway is carbohydrate degradation; glycolysis; pyruvate from D-glyceraldehyde 3-phosphate: step 1/5. This chain is Glyceraldehyde-3-phosphate dehydrogenase 1 (Gapdh1), found in Drosophila melanogaster (Fruit fly).